The following is a 153-amino-acid chain: Regulator of sigma D (153 aa).

It belongs to the Rsd/AlgQ family. As to quaternary structure, interacts with RpoD.

It is found in the cytoplasm. Its function is as follows. Binds RpoD and negatively regulates RpoD-mediated transcription activation by preventing the interaction between the primary sigma factor RpoD with the catalytic core of the RNA polymerase and with promoter DNA. May be involved in replacement of the RNA polymerase sigma subunit from RpoD to RpoS during the transition from exponential growth to the stationary phase. In Pectobacterium carotovorum subsp. carotovorum (strain PC1), this protein is Regulator of sigma D.